Reading from the N-terminus, the 351-residue chain is MKIAVLAGGKSTERNVSLSSGSKITNALRSKGYDATMIDLFLGYELEDGQSYEDVFKSSNTSTDYEISDAVLTEEDIEELRTDGTVGLFGKNVLPILQAADFVFLALHGGDGENGKVQAVLDLNHIKYTGSGSLASGIAMDKAISKEIMLYNNIKTAQFAVLHAKDGIHPQLAFDYPMVVKPNSGGSSIGTRIVHDEAELAESLKDAYRFDDEIIVEEFITGREFSLGVVNGQAMPAIEIVVNDGWYDYEHKFQTGSTTKFVTPPEIEDDVHDEMKRVAVQTMDALGMTNYGRVDFLTNDTGVYVIEANNLPGMTPLSLLPQEAEAAGISYEDLCESIVLGKQKLYDELKK.

One can recognise an ATP-grasp domain in the interval 146 to 340; the sequence is KEIMLYNNIK…YEDLCESIVL (195 aa). 173-226 lines the ATP pocket; it reads AFDYPMVVKPNSGGSSIGTRIVHDEAELAESLKDAYRFDDEIIVEEFITGREFS. 3 residues coordinate Mg(2+): D295, E307, and N309.

It belongs to the D-alanine--D-alanine ligase family. The cofactor is Mg(2+). Mn(2+) is required as a cofactor.

It is found in the cytoplasm. It catalyses the reaction 2 D-alanine + ATP = D-alanyl-D-alanine + ADP + phosphate + H(+). Its pathway is cell wall biogenesis; peptidoglycan biosynthesis. In terms of biological role, cell wall formation. This chain is D-alanine--D-alanine ligase, found in Pediococcus pentosaceus (strain ATCC 25745 / CCUG 21536 / LMG 10740 / 183-1w).